The primary structure comprises 455 residues: MAAREEVLALQAEVAQREEELSSLKQRLAAALSTGQESARSVPVSPLPPRAALSREEIRRYSRQLVLPELGMQGQLRLAAAAVLVVGCGGLGCPLAQYLAAAGVGRLGLVDYDVVEASNLARQVLHGEALAGQAKVFSAAAALRRLNSAVECVPYAQALTPATALDLVRRYDVVADCSDNAPTRYLVSDACVLAGRPLVSASALRFEGQLTVYHYGGGPCYRCVFPRPPPAETVTSCADGGVLGAVTGVLGCLQALEVLKTAAGLGPSYSGRLLLFDALRGDFRCIRLRRRRPDCAACGERPTVTDLQDYESFCGSSATDKCRSLRLLSPEERISIMDYKRLLDSRSPHLLLDVRPQVEVDICRLPHALHIPLKSLERRDAESLKVLGEAIREGKQGAQEGASVPIYVICKLGNDSQKAVKILQSWADLDSLTVKDVVGGLMAWAAKIDGTFPQY.

ATP contacts are provided by residues Gly-90, Asp-111, 118–122 (SNLAR), Lys-135, and 179–180 (DN). An interaction with NFS1 region spans residues 156 to 236 (AQALTPATAL…RPPPAETVTS (81 aa)). Zn(2+)-binding residues include Cys-220 and Cys-223. Cys-237 functions as the Glycyl thioester intermediate; for adenylyltransferase activity in the catalytic mechanism. Cys-295 and Cys-298 together coordinate Zn(2+). Cys-314 and Cys-322 are disulfide-bonded. Residues 345 to 453 (SRSPHLLLDV…WAAKIDGTFP (109 aa)) form the Rhodanese domain. Cys-410 functions as the Cysteine persulfide intermediate; for sulfurtransferase activity in the catalytic mechanism. Cys-410 carries the post-translational modification Cysteine persulfide.

In the N-terminal section; belongs to the HesA/MoeB/ThiF family. UBA4 subfamily. Interacts with NFS1. The cofactor is Zn(2+).

The protein resides in the cytoplasm. It localises to the cytosol. The enzyme catalyses [molybdopterin-synthase sulfur-carrier protein]-C-terminal Gly-Gly + ATP + H(+) = [molybdopterin-synthase sulfur-carrier protein]-C-terminal Gly-Gly-AMP + diphosphate. The catalysed reaction is [molybdopterin-synthase sulfur-carrier protein]-C-terminal Gly-Gly-AMP + S-sulfanyl-L-cysteinyl-[cysteine desulfurase] + AH2 = [molybdopterin-synthase sulfur-carrier protein]-C-terminal-Gly-aminoethanethioate + L-cysteinyl-[cysteine desulfurase] + A + AMP + 2 H(+). The protein operates within tRNA modification; 5-methoxycarbonylmethyl-2-thiouridine-tRNA biosynthesis. Its pathway is cofactor biosynthesis; molybdopterin biosynthesis. In terms of biological role, plays a central role in 2-thiolation of mcm(5)S(2)U at tRNA wobble positions of cytosolic tRNA(Lys), tRNA(Glu) and tRNA(Gln). Also essential during biosynthesis of the molybdenum cofactor. Acts by mediating the C-terminal thiocarboxylation of sulfur carriers URM1 and MOCS2A. Its N-terminus first activates URM1 and MOCS2A as acyl-adenylates (-COAMP), then the persulfide sulfur on the catalytic cysteine is transferred to URM1 and MOCS2A to form thiocarboxylation (-COSH) of their C-terminus. The reaction probably involves hydrogen sulfide that is generated from the persulfide intermediate and that acts as a nucleophile towards URM1 and MOCS2A. Subsequently, a transient disulfide bond is formed. Does not use thiosulfate as sulfur donor; NFS1 acting as a sulfur donor for thiocarboxylation reactions. The sequence is that of Adenylyltransferase and sulfurtransferase MOCS3 from Bos taurus (Bovine).